The chain runs to 320 residues: MSTPFKMERGVKYRDAAKTSIIPVKNIDPNQDLLKKPEWMKIKLPASSAKIESIKNGMRRHGLHSVCEEASCPNLHECFNHGTATFMILGAICTRRCPFCDVAHGKPLPPDPEEPQKLAETIQDMKLKYVVITSVDRDDLPDRGAGHFSECVKAVRELNPNIKIEILVPDFRGRITQALEKLKDNPPDVFNHNLENVPRLYKEIRPGADYEWSLKLLREFKEIFPNIPTKSGLMVGLGETNEEILQVMQDLRDNGVTMLTLGQYLQPSRHHLPVARYVPPTEFDEFRDKANEMGFEHAACGPFVRSSYHADLQASGGLVK.

[4Fe-4S] cluster contacts are provided by C67, C72, C78, C93, C97, C100, and S307. The region spanning 79–296 is the Radical SAM core domain; that stretch reads FNHGTATFMI…RDKANEMGFE (218 aa).

Belongs to the radical SAM superfamily. Lipoyl synthase family. The cofactor is [4Fe-4S] cluster.

It is found in the cytoplasm. The enzyme catalyses [[Fe-S] cluster scaffold protein carrying a second [4Fe-4S](2+) cluster] + N(6)-octanoyl-L-lysyl-[protein] + 2 oxidized [2Fe-2S]-[ferredoxin] + 2 S-adenosyl-L-methionine + 4 H(+) = [[Fe-S] cluster scaffold protein] + N(6)-[(R)-dihydrolipoyl]-L-lysyl-[protein] + 4 Fe(3+) + 2 hydrogen sulfide + 2 5'-deoxyadenosine + 2 L-methionine + 2 reduced [2Fe-2S]-[ferredoxin]. It participates in protein modification; protein lipoylation via endogenous pathway; protein N(6)-(lipoyl)lysine from octanoyl-[acyl-carrier-protein]: step 2/2. Catalyzes the radical-mediated insertion of two sulfur atoms into the C-6 and C-8 positions of the octanoyl moiety bound to the lipoyl domains of lipoate-dependent enzymes, thereby converting the octanoylated domains into lipoylated derivatives. In Haemophilus influenzae (strain ATCC 51907 / DSM 11121 / KW20 / Rd), this protein is Lipoyl synthase.